An 879-amino-acid polypeptide reads, in one-letter code: Alanine--tRNA ligase (879 aa).

Residues histidine 566, histidine 570, cysteine 668, and histidine 672 each contribute to the Zn(2+) site.

The protein belongs to the class-II aminoacyl-tRNA synthetase family. Requires Zn(2+) as cofactor.

The protein resides in the cytoplasm. It carries out the reaction tRNA(Ala) + L-alanine + ATP = L-alanyl-tRNA(Ala) + AMP + diphosphate. In terms of biological role, catalyzes the attachment of alanine to tRNA(Ala) in a two-step reaction: alanine is first activated by ATP to form Ala-AMP and then transferred to the acceptor end of tRNA(Ala). Also edits incorrectly charged Ser-tRNA(Ala) and Gly-tRNA(Ala) via its editing domain. This chain is Alanine--tRNA ligase, found in Clostridium botulinum (strain Alaska E43 / Type E3).